A 278-amino-acid polypeptide reads, in one-letter code: Juvenile hormone acid O-methyltransferase (278 aa).

The protein belongs to the methyltransferase superfamily. As to expression, specifically expressed in the corpora allata (CA).

It catalyses the reaction (2E,6E)-farnesoate + S-adenosyl-L-methionine = methyl (2E,6E)-farnesoate + S-adenosyl-L-homocysteine. The enzyme catalyses juvenile hormone III carboxylate + S-adenosyl-L-methionine = juvenile hormone III + S-adenosyl-L-homocysteine. O-methyltransferase that transfers a methyl group from S-adenosyl-L-methionine (SAM) to the carboxyl group of juvenile hormone acids to produce active juvenile hormones in the corpora allata, the last step during juvenile hormone biosynthesis. Also able to methylate farnesoate to methyl farnesoate. This is Juvenile hormone acid O-methyltransferase from Bombyx mori (Silk moth).